The following is a 132-amino-acid chain: Small ribosomal subunit protein uS8 (132 aa).

The protein belongs to the universal ribosomal protein uS8 family. Part of the 30S ribosomal subunit. Contacts proteins S5 and S12.

One of the primary rRNA binding proteins, it binds directly to 16S rRNA central domain where it helps coordinate assembly of the platform of the 30S subunit. This Leuconostoc mesenteroides subsp. mesenteroides (strain ATCC 8293 / DSM 20343 / BCRC 11652 / CCM 1803 / JCM 6124 / NCDO 523 / NBRC 100496 / NCIMB 8023 / NCTC 12954 / NRRL B-1118 / 37Y) protein is Small ribosomal subunit protein uS8.